The chain runs to 268 residues: Tryptophan synthase alpha chain (268 aa).

Active-site proton acceptor residues include glutamate 49 and aspartate 60.

This sequence belongs to the TrpA family. Tetramer of two alpha and two beta chains.

It catalyses the reaction (1S,2R)-1-C-(indol-3-yl)glycerol 3-phosphate + L-serine = D-glyceraldehyde 3-phosphate + L-tryptophan + H2O. Its pathway is amino-acid biosynthesis; L-tryptophan biosynthesis; L-tryptophan from chorismate: step 5/5. In terms of biological role, the alpha subunit is responsible for the aldol cleavage of indoleglycerol phosphate to indole and glyceraldehyde 3-phosphate. This Xanthomonas axonopodis pv. citri (strain 306) protein is Tryptophan synthase alpha chain.